The following is a 298-amino-acid chain: MSERIVPSGDVELWSDDFGDPADPALLLVMGGNLSALGWPDEFARRLADGGLHVIRYDHRDTGRSTTRDFAAHPYGFGELAADAVAVLDGWGVDRAHVVGLSMGATITQVIALDHHDRLSSLTMLLGGGLDIDFDANIERVMRGEPTLDGLPGPQQPFLDALALMNQPAEGRAAEVAKRVSKWRILSGTGVPFDDAEYARWEERAIDHAGGVLAEPYAHYSLTLPPPSRAAELREVTVPTLVIQAEHDPIAPAPHGKHLAGLIPTARLAEIPGMGHALPSSVHGPLAEVILAHTRSAA.

The region spanning 24–277 (PALLLVMGGN…LAEIPGMGHA (254 aa)) is the AB hydrolase-1 domain. Residues Ser102, Asp248, and His276 contribute to the active site.

It belongs to the AB hydrolase superfamily. Hydrolase RdmC family. Monomer.

It catalyses the reaction aclacinomycin T + H2O = 15-demethylaclacinomycin T + methanol. It functions in the pathway antibiotic biosynthesis; aclacinomycin biosynthesis. Functionally, involved in the biosynthesis of the anthracycline aclacinomycin which is an aromatic polyketide antibiotic that exhibits high cytotoxicity and is widely applied in the chemotherapy of a variety of cancers. Catalyzes the removal of the methoxy group from the C-15 position of aclacinomycin T and A to yield 15-demethoxyaclacinomycin T and A, respectively. This is Aclacinomycin methylesterase RdmC (rdmC) from Streptomyces purpurascens.